The chain runs to 146 residues: Hemoglobin subunit delta (146 aa).

One can recognise a Globin domain in the interval 2–146; sequence HLTGDEKSAV…VATALAHKYH (145 aa). Serine 50 bears the Phosphoserine mark. 2 residues coordinate heme b: histidine 63 and histidine 92.

The protein belongs to the globin family. As to quaternary structure, heterotetramer of two delta chains and two alpha chains. As to expression, red blood cells.

This chain is Hemoglobin subunit delta (HBD), found in Aotus trivirgatus (Three-striped night monkey).